Reading from the N-terminus, the 378-residue chain is 1-acyl-sn-glycerol-3-phosphate acyltransferase delta (378 aa).

A helical transmembrane segment spans residues 11–31 (FLCHLVFCYVFIASGLIINTI). Positions 96–101 (HKFEID) match the HXXXXD motif motif. A run of 3 helical transmembrane segments spans residues 125–145 (ELAY…VFCS), 307–327 (TLVN…QFLV), and 338–358 (LASF…MIGV).

It belongs to the 1-acyl-sn-glycerol-3-phosphate acyltransferase family.

It localises to the endoplasmic reticulum membrane. The enzyme catalyses a 1-acyl-sn-glycero-3-phosphate + an acyl-CoA = a 1,2-diacyl-sn-glycero-3-phosphate + CoA. It catalyses the reaction (4Z,7Z,10Z,13Z,16Z,19Z)-docosahexaenoyl-CoA + 1-hexadecanoyl-sn-glycero-3-phosphate = 1-hexadecanoyl-2-(4Z,7Z,10Z,13Z,16Z,19Z-docosahexaenoyl)-sn-glycero-3-phosphate + CoA. It carries out the reaction 1-octadecanoyl-sn-glycero-3-phosphate + (9Z,12Z)-octadecadienoyl-CoA = 1-octadecanoyl-2-(9Z,12Z-octadecadienoyl)-sn-glycero-3-phosphate + CoA. The catalysed reaction is 1-octadecanoyl-sn-glycero-3-phosphate + (4Z,7Z,10Z,13Z,16Z,19Z)-docosahexaenoyl-CoA = 1-octadecanoyl-2-(4Z,7Z,10Z,13Z,16Z,19Z-docosahexaenoyl)-sn-glycero-3-phosphate + CoA. The enzyme catalyses (4Z,7Z,10Z,13Z,16Z,19Z)-docosahexaenoyl-CoA + 1-(9Z-octadecenoyl)-sn-glycero-3-phosphate = 1-(9Z-octadecenoyl)-2-(4Z,7Z,10Z,13Z,16Z,19Z-docosahexaenoyl)-sn-glycero-3-phosphate + CoA. It functions in the pathway phospholipid metabolism; CDP-diacylglycerol biosynthesis; CDP-diacylglycerol from sn-glycerol 3-phosphate: step 2/3. Its function is as follows. Converts 1-acyl-sn-glycerol-3-phosphate (lysophosphatidic acid or LPA) into 1,2-diacyl-sn-glycerol-3-phosphate (phosphatidic acid or PA) by incorporating an acyl moiety at the sn-2 position of the glycerol backbone. Exhibits high acyl-CoA specificity for polyunsaturated fatty acyl-CoA, especially docosahexaenoyl-CoA (22:6-CoA, DHA-CoA). This Pongo abelii (Sumatran orangutan) protein is 1-acyl-sn-glycerol-3-phosphate acyltransferase delta (AGPAT4).